The sequence spans 72 residues: Osmotically-inducible lipoprotein B (72 aa).

The N-terminal stretch at 1–23 (MFVTSKKMTAAVLAITLAMSLSA) is a signal peptide. Cysteine 24 carries the N-palmitoyl cysteine lipid modification. Residue cysteine 24 is the site of S-diacylglycerol cysteine attachment.

The protein resides in the cell membrane. In terms of biological role, provides resistance to osmotic stress. May be important for stationary-phase survival. In Escherichia coli O157:H7, this protein is Osmotically-inducible lipoprotein B (osmB).